A 309-amino-acid chain; its full sequence is MDLIILVGIAVALLVVIVTLYLLQKKNAAPETKVAAAPQRGVPQRAQEGVPRRAQIARNQRNRLRQNVPAAPVAAAAGALPAAGDSDHEDEGQVDGDEARVPQGAVLDEKMGAKKRAKMEAKEQKRLQREQELHDREQRKVKEAKEEAERKQQEDLEAEAERKRVDAERLAKEERERKEHEEYLKMKAAFSVEEEGFEEGDADDQDNLLADFIQYIRDNKVVVLEDLAVAFKLKTQQVIDRIQNLQADGTLTGVIDDRGKFIYVSEKELLAVAKFIKQRGRVSIAELAESSNNLINLTPISAGGGEASS.

Residues 1-2 (MD) are Lumenal-facing. A helical membrane pass occupies residues 3-23 (LIILVGIAVALLVVIVTLYLL). Over 24 to 309 (QKKNAAPETK…ISAGGGEASS (286 aa)) the chain is Cytoplasmic. Disordered regions lie at residues 32-53 (TKVAAAPQRGVPQRAQEGVPRR) and 79-175 (ALPA…KEER). The segment covering 87–96 (DHEDEGQVDG) has biased composition (acidic residues). Over residues 107 to 175 (LDEKMGAKKR…DAERLAKEER (69 aa)) the composition is skewed to basic and acidic residues. The stretch at 120–177 (EAKEQKRLQREQELHDREQRKVKEAKEEAERKQQEDLEAEAERKRVDAERLAKEERER) forms a coiled coil.

This sequence belongs to the DDRGK1 family. As to quaternary structure, interacts with Atg9; the interaction is transient.

The protein localises to the endoplasmic reticulum membrane. Functionally, substrate adapter for ufmylation, the covalent attachment of the ubiquitin-like modifier UFM1 to substrate proteins. Required for ufmylation of Atg9; protects the nervous system during aging, possibly by stabilizing Atg9 and supporting its function. The protein is DDRGK domain-containing protein 1 of Drosophila melanogaster (Fruit fly).